A 98-amino-acid polypeptide reads, in one-letter code: Large ribosomal subunit protein bL27 (98 aa).

Positions 1-22 (MAHKKGTGSTRNGRDSNAQRLG) are disordered. The segment covering 7–19 (TGSTRNGRDSNAQ) has biased composition (polar residues).

Belongs to the bacterial ribosomal protein bL27 family.

The chain is Large ribosomal subunit protein bL27 from Nostoc punctiforme (strain ATCC 29133 / PCC 73102).